Here is a 181-residue protein sequence, read N- to C-terminus: Peptidyl-tRNA hydrolase (181 aa).

Tyr-14 lines the tRNA pocket. Residue His-19 is the Proton acceptor of the active site. The tRNA site is built by Tyr-62, Asn-64, and Asn-108.

This sequence belongs to the PTH family. In terms of assembly, monomer.

The protein resides in the cytoplasm. It carries out the reaction an N-acyl-L-alpha-aminoacyl-tRNA + H2O = an N-acyl-L-amino acid + a tRNA + H(+). Its function is as follows. Hydrolyzes ribosome-free peptidyl-tRNAs (with 1 or more amino acids incorporated), which drop off the ribosome during protein synthesis, or as a result of ribosome stalling. Catalyzes the release of premature peptidyl moieties from peptidyl-tRNA molecules trapped in stalled 50S ribosomal subunits, and thus maintains levels of free tRNAs and 50S ribosomes. This Campylobacter jejuni subsp. jejuni serotype O:2 (strain ATCC 700819 / NCTC 11168) protein is Peptidyl-tRNA hydrolase.